The chain runs to 419 residues: Serine hydroxymethyltransferase 1 (419 aa).

Residues Leu-121 and Gly-125 to Leu-127 contribute to the (6S)-5,6,7,8-tetrahydrofolate site. Lys-230 bears the N6-(pyridoxal phosphate)lysine mark. Ser-356 to Phe-358 serves as a coordination point for (6S)-5,6,7,8-tetrahydrofolate.

It belongs to the SHMT family. As to quaternary structure, homodimer. Pyridoxal 5'-phosphate serves as cofactor.

It localises to the cytoplasm. The enzyme catalyses (6R)-5,10-methylene-5,6,7,8-tetrahydrofolate + glycine + H2O = (6S)-5,6,7,8-tetrahydrofolate + L-serine. It functions in the pathway one-carbon metabolism; tetrahydrofolate interconversion. It participates in amino-acid biosynthesis; glycine biosynthesis; glycine from L-serine: step 1/1. Catalyzes the reversible interconversion of serine and glycine with tetrahydrofolate (THF) serving as the one-carbon carrier. This reaction serves as the major source of one-carbon groups required for the biosynthesis of purines, thymidylate, methionine, and other important biomolecules. Also exhibits THF-independent aldolase activity toward beta-hydroxyamino acids, producing glycine and aldehydes, via a retro-aldol mechanism. The protein is Serine hydroxymethyltransferase 1 of Colwellia psychrerythraea (strain 34H / ATCC BAA-681) (Vibrio psychroerythus).